Consider the following 513-residue polypeptide: Bifunctional pantoate ligase/cytidylate kinase (513 aa).

The tract at residues 1 to 282 (MGTFHRLTTT…VGQTRLIDNC (282 aa)) is pantoate--beta-alanine ligase. Position 32-39 (32-39 (MGALHGGH)) interacts with ATP. The Proton donor role is filled by H39. Q63 contacts (R)-pantoate. Q63 is a binding site for beta-alanine. 152 to 155 (GQKD) contacts ATP. Q158 lines the (R)-pantoate pocket. Residues V181 and 189-192 (LSSR) contribute to the ATP site. Positions 283–513 (LLDRRRPILA…HLYRSRFPQP (231 aa)) are cytidylate kinase.

This sequence in the N-terminal section; belongs to the pantothenate synthetase family. In the C-terminal section; belongs to the cytidylate kinase family. Type 1 subfamily.

It is found in the cytoplasm. The enzyme catalyses (R)-pantoate + beta-alanine + ATP = (R)-pantothenate + AMP + diphosphate + H(+). It catalyses the reaction CMP + ATP = CDP + ADP. It carries out the reaction dCMP + ATP = dCDP + ADP. Its pathway is cofactor biosynthesis; (R)-pantothenate biosynthesis; (R)-pantothenate from (R)-pantoate and beta-alanine: step 1/1. Its function is as follows. Catalyzes the condensation of pantoate with beta-alanine in an ATP-dependent reaction via a pantoyl-adenylate intermediate. Functionally, catalyzes the transfer of a phosphate group from ATP to either CMP or dCMP to form CDP or dCDP and ADP, respectively. The polypeptide is Bifunctional pantoate ligase/cytidylate kinase (Thermosynechococcus vestitus (strain NIES-2133 / IAM M-273 / BP-1)).